Consider the following 221-residue polypeptide: Elongation factor Ts (221 aa).

The segment at 82-85 (TDFV) is involved in Mg(2+) ion dislocation from EF-Tu.

Belongs to the EF-Ts family.

It localises to the cytoplasm. In terms of biological role, associates with the EF-Tu.GDP complex and induces the exchange of GDP to GTP. It remains bound to the aminoacyl-tRNA.EF-Tu.GTP complex up to the GTP hydrolysis stage on the ribosome. The protein is Elongation factor Ts of Synechococcus elongatus (strain ATCC 33912 / PCC 7942 / FACHB-805) (Anacystis nidulans R2).